Reading from the N-terminus, the 384-residue chain is Brix domain-containing protein F44G4.1 (384 aa).

Disordered regions lie at residues 1–58 (MAPK…KVVK) and 82–135 (SKAT…PQKE). The span at 18–48 (FVEEEVTGDVDEDGFEQAEDMPDEVDSDEDE) shows a compositional bias: acidic residues. The span at 96–114 (LPKSQRGKALKRALRKDKR) shows a compositional bias: basic residues. A compositionally biased stretch (basic and acidic residues) spans 115–127 (ARQGERAQIRDEL). Residues 177–360 (PKVMITMTPK…LKWLQKGTFD (184 aa)) enclose the Brix domain.

The sequence is that of Brix domain-containing protein F44G4.1 from Caenorhabditis elegans.